The following is a 550-amino-acid chain: Putative golgin subfamily A member 6-like protein 19 (550 aa).

The span at 1–11 shows a compositional bias: pro residues; sequence MWPQPRLPPHP. The tract at residues 1–77 is disordered; that stretch reads MWPQPRLPPH…DSATGVYGEG (77 aa). Over residues 51 to 62 the composition is skewed to polar residues; it reads NGSSPDTATSGG. A coiled-coil region spans residues 157–405; the sequence is SKVEQLQDET…QERLRQQDER (249 aa). Over residues 467–480 the composition is skewed to basic and acidic residues; that stretch reads KELEKSGGAEEPRG. Positions 467-529 are disordered; sequence KELEKSGGAE…VGTGEAAGGA (63 aa). Low complexity-rich tracts occupy residues 484–499 and 517–529; these read AAAARPVPGAPVPQGA and GEAVGTGEAAGGA.

Belongs to the GOLGA6 family.

This chain is Putative golgin subfamily A member 6-like protein 19 (GOLGA6L19), found in Homo sapiens (Human).